Consider the following 298-residue polypeptide: Fe(II)/2-oxoglutarate-dependent dioxygenase nvfF (298 aa).

Positions 137, 139, and 212 each coordinate Fe cation.

The protein belongs to the PhyH family. As to quaternary structure, homodimer. It depends on Fe cation as a cofactor.

It carries out the reaction fumigatonoid C + 2-oxoglutarate + O2 = novofumigatonin + succinate + CO2 + H2O. It functions in the pathway secondary metabolite biosynthesis; terpenoid biosynthesis. Fe(II)/2-oxoglutarate-dependent dioxygenase; part of the gene cluster that mediates the biosynthesis of novofumigatonin, a heavily oxygenated meroterpenoid containing a unique orthoester moiety. The first step of the pathway is the synthesis of 3,5-dimethylorsellinic acid (DMOA) by the polyketide synthase nvfA via condensation of one acetyl-CoA starter unit with 3 malonyl-CoA units and 2 methylations. DMOA is then converted to farnesyl-DMOA by the farnesyltransferase nvfB. Epoxydation by FAD-dependent monooxygenase nvfK, followed by a protonation-initiated cyclization catalyzed by the terpene cyclase nvfL leads to the production of asnavolin H. The short chain dehydrogenase nvfC then as a 3-OH dehydrogenase of asnovolin H to yield chemesin D. There are two branches to synthesize asnovolin A from chemesin D. In one branch, chemesin D undergoes Baeyer-Villiger oxidation by nvfH, methylation by nvfJ, and enoyl reduction by the nvfM D enoylreductase that reduces the double bond between C-5'and C-6', to form respectively asnovolin I, asnovolin K, and asnovolin A. In the other branch, the methylation precedes the Baeyer-Villiger oxidation and the enoyl reduction to yield asnovolin A via the asnovolin J intermediate. Asnovolin A is further converted to fumigatonoid A by the Fe(II)/2-oxoglutarate-dependent dioxygenase nvfI that catalyzes an endoperoxidation reaction. The alpha/beta hydrolase nvfD then acts as an epimerase that converts fumigatonoid A to its C-5' epimer, which then undergoes spontaneous or nvfD-catalyzed lactonization. The following step utilizes the ketoreductase nvfG to produce fumigatonoid B. The dioxygenase nvfE further converts fumigatonoid B into fumigatonoid C. Finally the Fe(II)/2-oxoglutarate-dependent dioxygenase nvfF catalyzes two rounds of oxidation to transform fumigatonoid C into the end product, novofumigatonin A. The chain is Fe(II)/2-oxoglutarate-dependent dioxygenase nvfF from Aspergillus novofumigatus (strain IBT 16806).